The chain runs to 186 residues: Putative manganese efflux pump MntP (186 aa).

Helical transmembrane passes span 1-21 (MSFL…FAVS), 41-61 (VFFG…GSAV), 62-82 (SGFV…FIGG), 105-127 (LFLL…AFLG), 139-159 (CVTF…GHFF), and 163-183 (VEIL…AEHM).

Belongs to the MntP (TC 9.B.29) family.

It is found in the cell membrane. Functionally, probably functions as a manganese efflux pump. In Methanosarcina mazei (strain ATCC BAA-159 / DSM 3647 / Goe1 / Go1 / JCM 11833 / OCM 88) (Methanosarcina frisia), this protein is Putative manganese efflux pump MntP.